The sequence spans 245 residues: Myelin protein P0 (245 aa).

A signal peptide spans 1-28 (MEPSGLRTPCSLLALVLLSALVLTPTLA). The region spanning 29–143 (IEVYTDREVY…VGKSSYVHLQ (115 aa)) is the Ig-like V-type domain. At 29–153 (IEVYTDREVY…VQEKGPARAG (125 aa)) the chain is on the extracellular side. Cysteines 49 and 125 form a disulfide. N-linked (GlcNAc...) asparagine glycosylation occurs at asparagine 120. Residues 154-174 (LILGIIIAVALALVIVVTILI) traverse the membrane as a helical segment. The Cytoplasmic portion of the chain corresponds to 175-245 (LLIRYCWLRR…GIGDSRKDRK (71 aa)). Basic and acidic residues-rich tracts occupy residues 199–208 (KLHKAKDSSK) and 224–245 (TRGK…KDRK). Residues 199–245 (KLHKAKDSSKRSSRQTPILYAMLDQTRGKSSEKKAKGGIGDSRKDRK) are disordered.

It belongs to the myelin P0 protein family.

It localises to the cell membrane. Creation of an extracellular membrane face which guides the wrapping process and ultimately compacts adjacent lamellae. This Xenopus laevis (African clawed frog) protein is Myelin protein P0 (mpz).